A 364-amino-acid chain; its full sequence is tRNA-specific 2-thiouridylase MnmA (364 aa).

Residues 6-13 (AMSGGVDS) and leucine 32 each bind ATP. The Nucleophile role is filled by cysteine 101. The cysteines at positions 101 and 193 are disulfide-linked. Glycine 125 contacts ATP. The tract at residues 143-145 (KDQ) is interaction with tRNA. Residue cysteine 193 is the Cysteine persulfide intermediate of the active site.

The protein belongs to the MnmA/TRMU family.

The protein localises to the cytoplasm. The catalysed reaction is S-sulfanyl-L-cysteinyl-[protein] + uridine(34) in tRNA + AH2 + ATP = 2-thiouridine(34) in tRNA + L-cysteinyl-[protein] + A + AMP + diphosphate + H(+). In terms of biological role, catalyzes the 2-thiolation of uridine at the wobble position (U34) of tRNA, leading to the formation of s(2)U34. This Rhodococcus opacus (strain B4) protein is tRNA-specific 2-thiouridylase MnmA.